A 255-amino-acid chain; its full sequence is ATP synthase subunit a (255 aa).

Positions 1–6 (MNFIIN) are cleaved as a propeptide — removed in mature form. Transmembrane regions (helical) follow at residues 32 to 52 (LTSF…FSIL), 91 to 111 (LFPF…VSLV), 121 to 141 (LIWT…TGLA), 159 to 200 (PLVP…LAGL), and 219 to 251 (LSIL…IKDA).

As to quaternary structure, F-type ATP synthases have 2 components, the catalytic core F(1) and the membrane-embedded component F(0), linked together by a central stalk and a peripheral stalk. The central stalk, also called rotor shaft, is often seen as part of F(1). The peripheral stalk is seen as part of F(0). F(0) contains the membrane channel next to the rotor. F-type ATP synthases form dimers but each monomer functions independently in ATP generation. The dimer consists of 17 different polypeptides: ATP1 (subunit alpha, 3 molecules per monomer, part of F(1)), ATP2 (subunit beta, 3 copies per monomer, part of F(1)), ATP3 (subunit gamma, part of the central stalk), ATP4 (subunit b, part of the peripheral stalk), ATP5/OSCP (subunit 5/OSCP, part of the peripheral stalk), ATP6 (subunit a, part of the peripheral stalk), ATP7 (subunit d, part of the peripheral stalk), ATP8 (subunit 8, part of the peripheral stalk), OLI1 (subunit c, part of the rotor, 10 molecules per monomer), ATP14 (subunit h, part of the peripheral stalk), ATP15 (subunit epsilon, part of the central stalk), ATP16 (subunit delta, part of the central stalk), ATP17 (subunit f, part of the peripheral stalk), ATP18 (subunit i/j, part of the peripheral stalk), ATP19 (subunit k, dimer-specific, at interface between monomers), ATP20 (subunit g, at interface between monomers), TIM11 (subunit e, at interface between monomers).

It localises to the mitochondrion inner membrane. Functionally, mitochondrial membrane ATP synthase (F(1)F(0) ATP synthase or Complex V) produces ATP from ADP in the presence of a proton gradient across the membrane which is generated by electron transport complexes of the respiratory chain. F-type ATP synthases consist of two structural domains, F(1) - containing the extramembraneous catalytic core, and F(0) - containing the membrane proton channel, linked together by a central stalk and a peripheral stalk. During catalysis, ATP synthesis in the catalytic domain of F(1) is coupled via a rotary mechanism of the central stalk subunits to proton translocation. Key component of the proton channel; it may play a direct role in the translocation of protons across the membrane. This Yarrowia lipolytica (strain CLIB 122 / E 150) (Yeast) protein is ATP synthase subunit a.